A 115-amino-acid polypeptide reads, in one-letter code: Large ribosomal subunit protein bL20c (115 aa).

This sequence belongs to the bacterial ribosomal protein bL20 family.

Its subcellular location is the plastid. The protein resides in the chloroplast. Binds directly to 23S ribosomal RNA and is necessary for the in vitro assembly process of the 50S ribosomal subunit. It is not involved in the protein synthesizing functions of that subunit. The sequence is that of Large ribosomal subunit protein bL20c (rpl20) from Cyanidium caldarium (Red alga).